The primary structure comprises 361 residues: Plasmid recombination enzyme (361 aa).

DNA is bound by residues Y44 and Y114. The interval R331–L361 is disordered.

The protein belongs to the plasmid mobilization pre family.

In terms of biological role, the interaction of the RSA site and the pre protein may not only serve a function in plasmid maintenance, but also contribute to the distribution of small antibiotic resistance plasmids among Gram-positive bacteria. The polypeptide is Plasmid recombination enzyme (preA) (Lactiplantibacillus plantarum (Lactobacillus plantarum)).